Reading from the N-terminus, the 780-residue chain is TSC22 domain family protein 2 (780 aa).

Disordered regions lie at residues 20 to 86 (AQVA…TVSP), 126 to 158 (TSAPAPGAPGGPQLAGSSAGPVTAAPSQPPTTC), 235 to 499 (AHGP…PGGP), 587 to 607 (LVGQVDDTRRKSEPLPQPPLS), and 736 to 780 (LSSN…VSSA). Residues 28-37 (EDTESLDDPD) show a composition bias toward acidic residues. A compositionally biased stretch (low complexity) spans 126-146 (TSAPAPGAPGGPQLAGSSAGP). A compositionally biased stretch (polar residues) spans 241–262 (GTDSSLTAVSQLPPSEKMSQPT). Low complexity-rich tracts occupy residues 297 to 316 (GAATGPQPMMAAAQPSQPQG), 344 to 361 (PAVGAPAAQQPQQFAYPQ), and 395 to 412 (QPSSTGAAASPATAATLP). Positions 415–434 (TGQNASSVGAQLMGASSQPS) are enriched in polar residues. Low complexity predominate over residues 453-468 (QPTGVPPATVGGVVQP). Polar residues predominate over residues 736–756 (LSSNDQLSQLPTQQANPGSTS). Residues 765–774 (PPQPTQPPQQ) show a composition bias toward pro residues.

It belongs to the TSC-22/Dip/Bun family. Interacts with NRBP1. Interacts with PKM isoform M2; the interaction results in reduced nuclear levels of PKM isoform M2, leading to repression of cyclin CCND1 transcription and reduced cell growth. Interacts with WDR77.

Reduces the level of nuclear PKM isoform M2 which results in repression of cyclin CCND1 transcription and reduced cell growth. This Homo sapiens (Human) protein is TSC22 domain family protein 2.